Reading from the N-terminus, the 158-residue chain is 2-C-methyl-D-erythritol 2,4-cyclodiphosphate synthase (158 aa).

2 residues coordinate a divalent metal cation: Asp-9 and His-11. 4-CDP-2-C-methyl-D-erythritol 2-phosphate-binding positions include 9–11 (DVH) and 35–36 (HS). An a divalent metal cation-binding site is contributed by His-43. Residues 57–59 (DIG), 62–66 (FPDTD), 133–136 (TTTE), Phe-140, and Arg-143 contribute to the 4-CDP-2-C-methyl-D-erythritol 2-phosphate site.

It belongs to the IspF family. Homotrimer. It depends on a divalent metal cation as a cofactor.

It carries out the reaction 4-CDP-2-C-methyl-D-erythritol 2-phosphate = 2-C-methyl-D-erythritol 2,4-cyclic diphosphate + CMP. It functions in the pathway isoprenoid biosynthesis; isopentenyl diphosphate biosynthesis via DXP pathway; isopentenyl diphosphate from 1-deoxy-D-xylulose 5-phosphate: step 4/6. In terms of biological role, involved in the biosynthesis of isopentenyl diphosphate (IPP) and dimethylallyl diphosphate (DMAPP), two major building blocks of isoprenoid compounds. Catalyzes the conversion of 4-diphosphocytidyl-2-C-methyl-D-erythritol 2-phosphate (CDP-ME2P) to 2-C-methyl-D-erythritol 2,4-cyclodiphosphate (ME-CPP) with a corresponding release of cytidine 5-monophosphate (CMP). The sequence is that of 2-C-methyl-D-erythritol 2,4-cyclodiphosphate synthase from Actinobacillus pleuropneumoniae serotype 7 (strain AP76).